The primary structure comprises 152 residues: Xanthine-guanine phosphoribosyltransferase (152 aa).

5-phospho-alpha-D-ribose 1-diphosphate-binding positions include 37–38 (RG), Arg-69, and 88–96 (DDLVDTGGT). Arg-69 serves as a coordination point for GMP. Asp-89 serves as a coordination point for Mg(2+). Residues Asp-92 and Ile-135 each coordinate guanine. Xanthine is bound by residues Asp-92 and Ile-135. GMP is bound by residues 92-96 (DTGGT) and 134-135 (WI).

The protein belongs to the purine/pyrimidine phosphoribosyltransferase family. XGPT subfamily. As to quaternary structure, homotetramer. It depends on Mg(2+) as a cofactor.

The protein resides in the cell inner membrane. It catalyses the reaction GMP + diphosphate = guanine + 5-phospho-alpha-D-ribose 1-diphosphate. The catalysed reaction is XMP + diphosphate = xanthine + 5-phospho-alpha-D-ribose 1-diphosphate. The enzyme catalyses IMP + diphosphate = hypoxanthine + 5-phospho-alpha-D-ribose 1-diphosphate. Its pathway is purine metabolism; GMP biosynthesis via salvage pathway; GMP from guanine: step 1/1. The protein operates within purine metabolism; XMP biosynthesis via salvage pathway; XMP from xanthine: step 1/1. Functionally, purine salvage pathway enzyme that catalyzes the transfer of the ribosyl-5-phosphate group from 5-phospho-alpha-D-ribose 1-diphosphate (PRPP) to the N9 position of the 6-oxopurines guanine and xanthine to form the corresponding ribonucleotides GMP (guanosine 5'-monophosphate) and XMP (xanthosine 5'-monophosphate), with the release of PPi. To a lesser extent, also acts on hypoxanthine. This Klebsiella pneumoniae (strain 342) protein is Xanthine-guanine phosphoribosyltransferase.